The chain runs to 705 residues: Catalase C (705 aa).

The tract at residues 1-31 is disordered; sequence MAKKPSAPNNTKPATIHDQKATRGNGGELHQ. Residues H88 and N161 contribute to the active site. Y375 contacts heme.

This sequence belongs to the catalase family. HPII subfamily. Requires heme as cofactor.

The catalysed reaction is 2 H2O2 = O2 + 2 H2O. Decomposes hydrogen peroxide into water and oxygen; serves to protect cells from the toxic effects of hydrogen peroxide. Could protect cells in nodules which have a high potential to produce hydrogen peroxide because of the strong reducing conditions required for nitrogen fixation and the action of several proteins. The protein is Catalase C (katE) of Rhizobium meliloti (strain 1021) (Ensifer meliloti).